Here is a 373-residue protein sequence, read N- to C-terminus: XK-related protein 9 (373 aa).

8 helical membrane-spanning segments follow: residues 8–28, 38–58, 166–186, 206–226, 230–250, 256–276, 295–315, and 318–338; these read FMMS…DIVL, YVLG…VHCF, MVIM…QIAL, LFYK…LLFV, VALL…FINH, SVSM…FTFF, VLGT…IFNS, and FIPI…FLGV.

The protein belongs to the XK family. In terms of processing, undergoes proteolytic processing by caspase-3 (CASP3), caspase-6 (CASP6) and caspase-7 (CASP7) to generate the XK-related protein 9, processed form, leading to its activation. Highly expressed in the small intestines; weakly expressed in the pancreas, liver, stomach, and large intestines.

The protein resides in the cell membrane. The enzyme catalyses a 1,2-diacyl-sn-glycero-3-phospho-L-serine(in) = a 1,2-diacyl-sn-glycero-3-phospho-L-serine(out). Activated upon caspase cleavage to generate the XK-related protein 9, processed form. Does not act prior the onset of apoptosis. Phospholipid scramblase that promotes phosphatidylserine exposure on apoptotic cell surface. Phosphatidylserine is a specific marker only present at the surface of apoptotic cells and acts as a specific signal for engulfment. This chain is XK-related protein 9, found in Mus musculus (Mouse).